The sequence spans 1026 residues: DNA polymerase catalytic subunit (1026 aa).

The stretch at 664 to 695 (LKTWLAKRKSIKKELEQCQDAKMKTILDKQQL) forms a coiled coil.

The protein belongs to the DNA polymerase type-B family.

It is found in the host nucleus. The enzyme catalyses DNA(n) + a 2'-deoxyribonucleoside 5'-triphosphate = DNA(n+1) + diphosphate. Replicates viral genomic DNA. The chain is DNA polymerase catalytic subunit (9) from Alcelaphine herpesvirus 1 (strain C500) (AlHV-1).